The chain runs to 1379 residues: ABC multidrug transporter MDR2 (1379 aa).

A helical membrane pass occupies residues 65 to 85 (IALIVIGTIAGIGAGIPFPLL). Positions 69-367 (VIGTIAGIGA…MAPFMHIFAS (299 aa)) constitute an ABC transmembrane type-1 1 domain. The N-linked (GlcNAc...) asparagine glycan is linked to asparagine 97. Transmembrane regions (helical) follow at residues 119-139 (VLQVIYVSILNFVCMYIHTGC), 193-213 (KVGLFIGTISYFVAAYIVAFL), 215-235 (VATIAAMLMSVVPIYFLMAFG), 301-321 (IQFGMLYFVAYASNALAFWQG), and 336-356 (VSVGAVYTVIFVLLDASFVLS). One can recognise an ABC transporter 1 domain in the interval 403 to 682 (IELQDVTFNY…DGVYAGMVRL (280 aa)). 438-445 (GTSGSGKS) lines the ATP pocket. Residues asparagine 552 and asparagine 633 are each glycosylated (N-linked (GlcNAc...) asparagine). Residues 738–758 (YMPEEADSLPTEPENEKEKPK) are disordered. Transmembrane regions (helical) follow at residues 781–801 (LGLITSIMIGVSYTGEAVIFG), 820–840 (GMLFGLLFFILAIVKFAAVIV), 881–901 (LLVALVTSDASALSSLTGTTI), and 920–942 (VIAWKIAVVLLATLPVLLASGVL). Positions 781-1068 (LGLITSIMIG…MFALVPDISK (288 aa)) constitute an ABC transmembrane type-1 2 domain. N-linked (GlcNAc...) asparagine glycosylation occurs at asparagine 989. Transmembrane regions (helical) follow at residues 1008–1028 (FWLSLAYSISTLVYALAYWWG) and 1032–1052 (ILAGMYTQVQFFIVLPALLFS). The ABC transporter 2 domain maps to 1135–1374 (VQFRNVHFRY…CESYRANVIH (240 aa)). 1170-1177 (GPSGSGKS) lines the ATP pocket.

The protein belongs to the ABC transporter superfamily. ABCB family. Multidrug resistance exporter (TC 3.A.1.201) subfamily.

Its subcellular location is the cell membrane. Pleiotropic ABC efflux transporter that may be involved in the modulation susceptibility to a wide range of unrelated cytotoxic compounds. This is ABC multidrug transporter MDR2 from Trichophyton interdigitale (strain MR816).